Consider the following 494-residue polypeptide: Alpha-amylase-related protein (494 aa).

The N-terminal stretch at 1 to 20 (MIKFALALTLCLAGASLSLA) is a signal peptide. A Pyrrolidone carboxylic acid modification is found at Gln-21. The cysteines at positions 48 and 104 are disulfide-linked. The Ca(2+) site is built by Asn-118, Gln-169, and Asp-178. Cys-157 and Cys-171 are oxidised to a cystine. Arg-206 is a chloride binding site. Asp-208 acts as the Nucleophile in catalysis. His-212 lines the Ca(2+) pocket. Glu-245 functions as the Proton donor in the catalytic mechanism. The chloride site is built by Asn-308 and Arg-343. 3 disulfides stabilise this stretch: Cys-376-Cys-382, Cys-418-Cys-441, and Cys-448-Cys-460.

Belongs to the glycosyl hydrolase 13 family. Monomer. Ca(2+) is required as a cofactor. It depends on chloride as a cofactor.

The protein localises to the secreted. The enzyme catalyses Endohydrolysis of (1-&gt;4)-alpha-D-glucosidic linkages in polysaccharides containing three or more (1-&gt;4)-alpha-linked D-glucose units.. The protein is Alpha-amylase-related protein (Amyrel) of Drosophila lini (Fruit fly).